The chain runs to 203 residues: Orotate phosphoribosyltransferase (203 aa).

5-phospho-alpha-D-ribose 1-diphosphate contacts are provided by residues Arg94, Lys98, His100, and 120 to 128 (EDLISTGGS). Position 124 (Ser124) interacts with orotate.

It belongs to the purine/pyrimidine phosphoribosyltransferase family. PyrE subfamily. In terms of assembly, homodimer. Mg(2+) serves as cofactor.

It catalyses the reaction orotidine 5'-phosphate + diphosphate = orotate + 5-phospho-alpha-D-ribose 1-diphosphate. The protein operates within pyrimidine metabolism; UMP biosynthesis via de novo pathway; UMP from orotate: step 1/2. Functionally, catalyzes the transfer of a ribosyl phosphate group from 5-phosphoribose 1-diphosphate to orotate, leading to the formation of orotidine monophosphate (OMP). This is Orotate phosphoribosyltransferase from Staphylococcus aureus (strain COL).